The primary structure comprises 292 residues: 4-hydroxy-tetrahydrodipicolinate synthase (292 aa).

Residue threonine 45 coordinates pyruvate. The Proton donor/acceptor role is filled by tyrosine 133. Lysine 161 acts as the Schiff-base intermediate with substrate in catalysis. Pyruvate is bound at residue isoleucine 203.

It belongs to the DapA family. In terms of assembly, homotetramer; dimer of dimers.

It localises to the cytoplasm. The enzyme catalyses L-aspartate 4-semialdehyde + pyruvate = (2S,4S)-4-hydroxy-2,3,4,5-tetrahydrodipicolinate + H2O + H(+). Its pathway is amino-acid biosynthesis; L-lysine biosynthesis via DAP pathway; (S)-tetrahydrodipicolinate from L-aspartate: step 3/4. In terms of biological role, catalyzes the condensation of (S)-aspartate-beta-semialdehyde [(S)-ASA] and pyruvate to 4-hydroxy-tetrahydrodipicolinate (HTPA). This chain is 4-hydroxy-tetrahydrodipicolinate synthase, found in Nitrosomonas eutropha (strain DSM 101675 / C91 / Nm57).